Reading from the N-terminus, the 360-residue chain is Nicotinate-nucleotide--dimethylbenzimidazole phosphoribosyltransferase (360 aa).

Glutamate 327 functions as the Proton acceptor in the catalytic mechanism.

It belongs to the CobT family.

The enzyme catalyses 5,6-dimethylbenzimidazole + nicotinate beta-D-ribonucleotide = alpha-ribazole 5'-phosphate + nicotinate + H(+). It functions in the pathway nucleoside biosynthesis; alpha-ribazole biosynthesis; alpha-ribazole from 5,6-dimethylbenzimidazole: step 1/2. Functionally, catalyzes the synthesis of alpha-ribazole-5'-phosphate from nicotinate mononucleotide (NAMN) and 5,6-dimethylbenzimidazole (DMB). The polypeptide is Nicotinate-nucleotide--dimethylbenzimidazole phosphoribosyltransferase (Shewanella baltica (strain OS185)).